The sequence spans 271 residues: Hematopoietically-expressed homeobox protein Hhex (271 aa).

Residues 1-138 are interaction with SOX13; the sequence is MQFPHPGPAA…PFLQRPLHKR (138 aa). Serine 54 is modified (phosphoserine). The segment at residues 138–197 is a DNA-binding region (homeobox); the sequence is RKGGQVRFSNDQTVELEKKFETQKYLSPPERKRLAKMLQLSERQVKTWFQNRRAKWRRLK. Positions 138 to 271 are required for WNT signaling induction; sequence RKGGQVRFSN…EGDKGYFNAG (134 aa). A disordered region spans residues 195 to 271; that stretch reads RLKQENPQSN…EGDKGYFNAG (77 aa). Residues 212–242 are compositionally biased toward polar residues; it reads LDTSCEQGQDLPSEQNKGASLDRSQCSPSPA. A compositionally biased stretch (acidic residues) spans 245–261; sequence EDPDSEISEDSDQEVDI.

Interacts with CD81; the interaction prevents nuclear translocation of HHEX. Interacts (via N-terminus) with SOX13; abolishes the SOX13-mediated inhibition of WNT-mediated transcriptional activity via competitive inhibition of the SOX13-TCF7 complex. Interacts with EIF4E; the interaction inhibits EIF4E-mediated mRNA nuclear export.

The protein resides in the nucleus. Its subcellular location is the nuclear body. The protein localises to the cytoplasm. In terms of biological role, recognizes the DNA sequence 5'-ATTAA-3'. Transcriptional repressor. Activator of WNT-mediated transcription in conjunction with CTNNB1. Establishes anterior identity at two levels; acts early to enhance canonical WNT-signaling by repressing expression of TLE4, and acts later to inhibit NODAL-signaling by directly targeting NODAL. Inhibits EIF4E-mediated mRNA nuclear export. May play a role in hematopoietic differentiation. The polypeptide is Hematopoietically-expressed homeobox protein Hhex (Hhex) (Mus musculus (Mouse)).